A 349-amino-acid polypeptide reads, in one-letter code: Probable arabinogalactan endo-beta-1,4-galactanase A (349 aa).

An N-terminal signal peptide occupies residues 1-15 (MLLSFLPLLPLATAA). Asn126 carries N-linked (GlcNAc...) asparagine glycosylation. Glu150 (proton donor) is an active-site residue. The active-site Nucleophile is the Glu261.

This sequence belongs to the glycosyl hydrolase 53 family.

The protein resides in the secreted. The enzyme catalyses The enzyme specifically hydrolyzes (1-&gt;4)-beta-D-galactosidic linkages in type I arabinogalactans.. Functionally, endogalactanase involved in the degradation of plant cell wall polysaccharides, and more particularly of hairy regions of pectin. This Aspergillus terreus (strain NIH 2624 / FGSC A1156) protein is Probable arabinogalactan endo-beta-1,4-galactanase A (galA).